A 1115-amino-acid chain; its full sequence is Serine/threonine-protein kinase/endoribonuclease IRE1 (1115 aa).

A signal peptide spans 1–18 (MRLLRRNMLVLTLLVCVF). Topologically, residues 19-526 (SSIISCSIPL…RELDEKNQNS (508 aa)) are lumenal. N-linked (GlcNAc...) asparagine glycans are attached at residues Asn-111, Asn-213, Asn-298, and Asn-397. The helical transmembrane segment at 527 to 555 (LLLKFGSLVYRIIETGVFLLLFLIFCAIL) threads the bilayer. Over 556 to 1115 (QRFKILPPLY…DQILREFLYS (560 aa)) the chain is Cytoplasmic. The disordered stretch occupies residues 617 to 658 (GSLKSEKDNDDADEDDEKSLDLTTEKKKRKRGSRGGKKGRKS). Over residues 624–634 (DNDDADEDDEK) the composition is skewed to acidic residues. Over residues 642–658 (KKKRKRGSRGGKKGRKS) the composition is skewed to basic residues. One can recognise a Protein kinase domain in the interval 674-980 (VVSEKILGYG…AMKVLRHPLF (307 aa)). 5 residues coordinate ADP: Ser-684, Lys-702, Glu-746, Cys-748, and Asn-751. Residue Asp-797 is the Proton acceptor of the active site. Positions 802 and 828 each coordinate Mg(2+). A phosphoserine; by autocatalysis mark is found at Ser-840 and Ser-841. Position 844 is a phosphothreonine; by autocatalysis (Thr-844). The region spanning 983 to 1115 (KSKKLEFLLK…DQILREFLYS (133 aa)) is the KEN domain.

It belongs to the protein kinase superfamily. Ser/Thr protein kinase family. In terms of assembly, homodimer; in response to the accumulation of unfolded proteins. Dimerization of lumenal domains help position the cytoplasmic kinase domains optimally for autophosphorylation to initiate the unfolded protein response. Dimerization of the kinase domain is important for ribonuclease activity. Interacts (when phosphorylated) with PTC2; the interaction is direct and serves to attenuate the endoplasmic reticulum unfolded protein response. Mg(2+) is required as a cofactor. Post-translationally, autophosphorylated mainly on serine residues; phosphorylation enables nucleotide binding by the active site.

It is found in the endoplasmic reticulum membrane. It carries out the reaction L-seryl-[protein] + ATP = O-phospho-L-seryl-[protein] + ADP + H(+). The catalysed reaction is L-threonyl-[protein] + ATP = O-phospho-L-threonyl-[protein] + ADP + H(+). Its activity is regulated as follows. The kinase domain is activated by trans-autophosphorylation. Kinase activity is required for activation of the endoribonuclease domain. Inactivated by dephosphorylation via recruitment of PTC2. Its function is as follows. Senses unfolded proteins in the lumen of the endoplasmic reticulum via its N-terminal domain which leads to enzyme auto-activation. The active endoribonuclease domain splices HAC1 precursor mRNA to produce the mature form which then induces transcription of UPR target genes. This is Serine/threonine-protein kinase/endoribonuclease IRE1 (IRE1) from Saccharomyces cerevisiae (strain ATCC 204508 / S288c) (Baker's yeast).